The sequence spans 21 residues: GMASKAGAIAGKIAKVALKAL.

L21 bears the Leucine amide mark.

In terms of tissue distribution, expressed by the skin glands.

It localises to the secreted. Antimicrobial peptide. This chain is Peptide PGLa-R2, found in Xenopus ruwenzoriensis (Uganda clawed frog).